Here is a 251-residue protein sequence, read N- to C-terminus: uncharacterized protein (251 aa).

Position 14-37 (14-37 (VLGGTSAIGLATARRLIARGARLV)) interacts with NADP(+). Serine 145 lines the substrate pocket. Tyrosine 158 serves as the catalytic Proton acceptor.

The protein belongs to the short-chain dehydrogenases/reductases (SDR) family.

Functionally, may be involved in the biosynthesis of a heptaene-type antibiotic. This is an uncharacterized protein from Streptomyces coelicolor.